A 142-amino-acid polypeptide reads, in one-letter code: UPF0336 protein PPA1896 (142 aa).

This sequence belongs to the UPF0336 family.

This Cutibacterium acnes (strain DSM 16379 / KPA171202) (Propionibacterium acnes) protein is UPF0336 protein PPA1896.